Here is a 135-residue protein sequence, read N- to C-terminus: Large ribosomal subunit protein uL16c (135 aa).

It belongs to the universal ribosomal protein uL16 family. As to quaternary structure, part of the 50S ribosomal subunit.

The protein resides in the plastid. It localises to the chloroplast. The sequence is that of Large ribosomal subunit protein uL16c from Ceratophyllum demersum (Rigid hornwort).